A 138-amino-acid chain; its full sequence is Large ribosomal subunit protein uL16 (138 aa).

Residues 1-13 (MLQPARRKFRKEQ) show a composition bias toward basic residues. Residues 1–22 (MLQPARRKFRKEQKGRNTGVAT) form a disordered region.

The protein belongs to the universal ribosomal protein uL16 family. Part of the 50S ribosomal subunit.

Its function is as follows. Binds 23S rRNA and is also seen to make contacts with the A and possibly P site tRNAs. This Acidovorax ebreus (strain TPSY) (Diaphorobacter sp. (strain TPSY)) protein is Large ribosomal subunit protein uL16.